The following is a 224-amino-acid chain: Putative adhesin A1E_05320 (224 aa).

The signal sequence occupies residues 1-22; sequence MKKLLLIAATSATMLSSTLSFA.

The protein is Putative adhesin A1E_05320 of Rickettsia canadensis (strain McKiel).